Consider the following 327-residue polypeptide: Mitochondrial coenzyme A transporter SLC25A42 (327 aa).

3 Solcar repeats span residues 34–120 (KSIL…YKKL), 132–217 (LTPI…LKKL), and 227–315 (PYPF…TQIL). 6 helical membrane-spanning segments follow: residues 36–56 (ILNS…AVAP), 92–112 (LWRG…IQFC), 138–158 (LLAG…LDLV), 189–209 (LYRG…ISFF), 233–253 (LLFG…LDVV), and 296–316 (VKGP…QILL).

The protein belongs to the mitochondrial carrier (TC 2.A.29) family.

It localises to the mitochondrion inner membrane. The catalysed reaction is ADP(out) + CoA(in) = ADP(in) + CoA(out). The enzyme catalyses 3'-dephospho-CoA(in) + ADP(out) = 3'-dephospho-CoA(out) + ADP(in). It carries out the reaction adenosine 3',5'-bisphosphate(in) + ADP(out) = adenosine 3',5'-bisphosphate(out) + ADP(in). It catalyses the reaction AMP(in) + ADP(out) = AMP(out) + ADP(in). The catalysed reaction is dADP(in) + ADP(out) = dADP(out) + ADP(in). The enzyme catalyses ADP(in) + ATP(out) = ADP(out) + ATP(in). Its function is as follows. Mitochondrial carrier mediating the transport of coenzyme A (CoA) in mitochondria in exchange for intramitochondrial (deoxy)adenine nucleotides and adenosine 3',5'-diphosphate. This Xenopus tropicalis (Western clawed frog) protein is Mitochondrial coenzyme A transporter SLC25A42 (slc25a42).